Consider the following 290-residue polypeptide: Translin-associated protein X (290 aa).

A disordered region spans residues 1 to 32 (MSNKEGSGGFRKRKHDNFPHNQRREGKDVNSS). Over residues 16–28 (DNFPHNQRREGKD) the composition is skewed to basic and acidic residues. The segment at 73 to 208 (LLHRITSAPD…MRMCINSVGN (136 aa)) is interaction with C1D. Mg(2+) is bound by residues Glu129 and Glu197. Residue Lys279 forms a Glycyl lysine isopeptide (Lys-Gly) (interchain with G-Cter in SUMO2) linkage.

Belongs to the translin family. In terms of assembly, ring-shaped heterooctamer of six TSN and two TSNAX subunits. Interacts with GOLGA3, TSNAXIP1, SUN1 and AKAP9. Interacts with the homodimeric form of C1D following gamma-radiation. Interacts with TSN and C1D in a mutually exclusive manner. In terms of processing, sumoylated with SUMO1.

The protein localises to the cytoplasm. It localises to the perinuclear region. It is found in the golgi apparatus. Its subcellular location is the nucleus. Its function is as follows. Acts in combination with TSN as an endonuclease involved in the activation of the RNA-induced silencing complex (RISC). Possible role in spermatogenesis. This chain is Translin-associated protein X (TSNAX), found in Pongo abelii (Sumatran orangutan).